Here is a 150-residue protein sequence, read N- to C-terminus: UPF0208 membrane protein VV1_2222 (150 aa).

2 helical membrane passes run 42-62 (FGIKVMPAIAAISVLTQMAFN) and 70-90 (AIVMALFALSLPLQGMWWLGH).

This sequence belongs to the UPF0208 family.

The protein localises to the cell inner membrane. The polypeptide is UPF0208 membrane protein VV1_2222 (Vibrio vulnificus (strain CMCP6)).